Reading from the N-terminus, the 428-residue chain is Histidinol dehydrogenase homolog (428 aa).

Residues Gln-250 and His-253 each contribute to the Zn(2+) site. Active-site proton acceptor residues include Glu-320 and His-321. Asp-354 and His-413 together coordinate Zn(2+).

The protein belongs to the histidinol dehydrogenase family. It depends on Zn(2+) as a cofactor.

The polypeptide is Histidinol dehydrogenase homolog (Pelagibacter ubique (strain HTCC1062)).